A 610-amino-acid chain; its full sequence is Major facilitator superfamily multidrug transporter FLU1 (610 aa).

Residues Asn3 and Asn21 are each glycosylated (N-linked (GlcNAc...) asparagine). Residues 47 to 58 (GPTDSVESSSNT) are compositionally biased toward polar residues. The tract at residues 47 to 74 (GPTDSVESSSNTADEENEINSFNAQNVK) is disordered. 11 helical membrane passes run 165–185 (ILYCASVGLAALSVSMGSAMF), 209–229 (LFVFGFASGPVIYGPLSELFG), 231–251 (KLVMVPSCLGYVCFSFAVATA), 262–282 (FFAGFIGAAPLVVAPAVMADM), 292–312 (IAIFSMLLFGGPMLAPILGAF), 323–343 (WTSYFCGIIGSLALFMNTFLL), 408–428 (AFIYGMLYLFLTAIPLIFLGE), 437–457 (ELPYLAMLIGILIGGGMIMLF), 478–498 (LEPMMVGGFTFVIGIFWLGWT), 507–527 (WIVPVIGAAFVGNGLMLIFLP), and 530–550 (NYIIDCYLLYAATALAGNTFI). Asn568 is a glycosylation site (N-linked (GlcNAc...) asparagine). Residues 573 to 593 (WASTLLGCIGILLLPMPFVFY) traverse the membrane as a helical segment.

It belongs to the major facilitator superfamily. DHA1 family. Polyamines/proton antiporter (TC 2.A.1.2.16) subfamily.

It localises to the cell membrane. Major facilitator superfamily transporter that mediates resistance to structurally and functionally unrelated compounds including cycloheximide but also azoles such as fuconazole, ketoconazole and itraconazole. Also mediates efflux of histatin 5, a salivary human antimicrobial peptide, and is responsible for reduction of its toxicity in C.albicans. This Candida albicans (strain SC5314 / ATCC MYA-2876) (Yeast) protein is Major facilitator superfamily multidrug transporter FLU1.